The primary structure comprises 652 residues: uncharacterized protein (652 aa).

Basic and acidic residues-rich tracts occupy residues 1–13 and 641–652; these read MSVT…TERK and ATERTDNLADAA. 2 disordered regions span residues 1–21 and 628–652; these read MSVT…PAKT and VPGW…ADAA.

This sequence belongs to the ParB family.

This is an uncharacterized protein from Escherichia coli O157:H7.